We begin with the raw amino-acid sequence, 1295 residues long: Serine protease pet autotransporter (1295 aa).

The signal sequence occupies residues 1–52 (MNKIYSIKYSAATGGLIAVSELAKKVICKTNRKISAALLSLAVISYTNIIYA). Residues 54–304 (NMDISKAWAR…TPFDSKTTNE (251 aa)) form the Peptidase S6 domain. Residues His-124, Asp-153, and Ser-260 each act as charge relay system in the active site. Residues 1029–1295 (DINGEAGAWA…AINANFRYSF (267 aa)) form the Autotransporter domain.

Post-translationally, cleaved to release the mature protein from the outer membrane.

The protein resides in the periplasm. The protein localises to the secreted. Its subcellular location is the cell surface. It localises to the cell outer membrane. With respect to regulation, inhibition of cytotoxic activity by phenylmethylsulfonyl fluoride. Serine protease with enterotoxic and cytotoxic activity. Internalization into the host cell is required for the induction of cytopathic effects. However, the serine activity is not necessary for secretion and internalization into the host cell. In Escherichia coli O44:H18 (strain 042 / EAEC), this protein is Serine protease pet autotransporter (pet).